The chain runs to 244 residues: Carbonic anhydrase (244 aa).

A signal peptide spans 1–19 (MKGKFSIALMLSACFSASA). One can recognise an Alpha-carbonic anhydrase domain in the interval 23 to 244 (VHWGYEGSGD…QPLNGRIIIH (222 aa)). An intrachain disulfide couples Cys46 to Cys199. Residue His84 is the Proton acceptor of the active site. Zn(2+)-binding residues include His109, His111, and His128. 195–196 (TT) serves as a coordination point for substrate.

This sequence belongs to the alpha-carbonic anhydrase family. Requires Zn(2+) as cofactor.

It localises to the periplasm. It catalyses the reaction hydrogencarbonate + H(+) = CO2 + H2O. Its function is as follows. Reversible hydration of carbon dioxide. The polypeptide is Carbonic anhydrase (cah) (Pectobacterium atrosepticum (strain SCRI 1043 / ATCC BAA-672) (Erwinia carotovora subsp. atroseptica)).